The chain runs to 182 residues: Isopentenyl-diphosphate Delta-isomerase (182 aa).

Residues histidine 25 and histidine 32 each contribute to the Mn(2+) site. The region spanning 30 to 164 is the Nudix hydrolase domain; that stretch reads LLHLAFSSWL…PWAFSPWMVM (135 aa). The active site involves cysteine 67. Histidine 69 serves as a coordination point for Mn(2+). Glutamate 87 is a binding site for Mg(2+). Mn(2+) is bound by residues glutamate 114 and glutamate 116. Glutamate 116 is an active-site residue.

This sequence belongs to the IPP isomerase type 1 family. As to quaternary structure, homodimer. Mg(2+) is required as a cofactor. Requires Mn(2+) as cofactor.

Its subcellular location is the cytoplasm. It carries out the reaction isopentenyl diphosphate = dimethylallyl diphosphate. Its pathway is isoprenoid biosynthesis; dimethylallyl diphosphate biosynthesis; dimethylallyl diphosphate from isopentenyl diphosphate: step 1/1. In terms of biological role, catalyzes the 1,3-allylic rearrangement of the homoallylic substrate isopentenyl (IPP) to its highly electrophilic allylic isomer, dimethylallyl diphosphate (DMAPP). This chain is Isopentenyl-diphosphate Delta-isomerase, found in Escherichia coli O7:K1 (strain IAI39 / ExPEC).